Reading from the N-terminus, the 445-residue chain is Phosphoglucosamine mutase (445 aa).

Ser-102 serves as the catalytic Phosphoserine intermediate. Positions 102, 241, 243, and 245 each coordinate Mg(2+). Position 102 is a phosphoserine (Ser-102).

The protein belongs to the phosphohexose mutase family. Mg(2+) serves as cofactor. Post-translationally, activated by phosphorylation.

The catalysed reaction is alpha-D-glucosamine 1-phosphate = D-glucosamine 6-phosphate. Catalyzes the conversion of glucosamine-6-phosphate to glucosamine-1-phosphate. The protein is Phosphoglucosamine mutase of Escherichia coli O127:H6 (strain E2348/69 / EPEC).